The following is an 803-amino-acid chain: Translation initiation factor IF-2 (803 aa).

Disordered stretches follow at residues 95–125 and 138–178; these read PVVEQKRETEPAPTQEVPLTSDTTNLNEKAE and EVKE…EREE. Over residues 111–121 the composition is skewed to polar residues; sequence VPLTSDTTNLN. The span at 138–155 shows a compositional bias: basic and acidic residues; it reads EVKEEAKKTPSEKKETPK. Residues 156-167 show a composition bias toward basic residues; the sequence is KGPRKETRRSRK. The segment covering 168–178 has biased composition (basic and acidic residues); sequence PDKEDKWEREE. The tr-type G domain occupies 302–471; sequence PRAPVVTIMG…LLQAEVLELK (170 aa). The interval 311-318 is G1; the sequence is GHVDHGKT. 311 to 318 provides a ligand contact to GTP; sequence GHVDHGKT. Residues 336 to 340 form a G2 region; sequence GITQH. The tract at residues 357 to 360 is G3; it reads DTPG. GTP-binding positions include 357 to 361 and 411 to 414; these read DTPGH and NKID. Positions 411-414 are G4; the sequence is NKID. Residues 447-449 are G5; the sequence is SAK.

Belongs to the TRAFAC class translation factor GTPase superfamily. Classic translation factor GTPase family. IF-2 subfamily.

The protein localises to the cytoplasm. Its function is as follows. One of the essential components for the initiation of protein synthesis. Protects formylmethionyl-tRNA from spontaneous hydrolysis and promotes its binding to the 30S ribosomal subunits. Also involved in the hydrolysis of GTP during the formation of the 70S ribosomal complex. In Coxiella burnetii (strain RSA 331 / Henzerling II), this protein is Translation initiation factor IF-2.